The chain runs to 295 residues: Glutamyl-Q tRNA(Asp) synthetase (295 aa).

Residues 6–10 (RFAPS) and E42 each bind L-glutamate. The 'HIGH' region motif lies at 9–19 (PSPTGAMHLGN). Residues C93, C95, Y118, and C122 each coordinate Zn(2+). L-glutamate is bound by residues Y177 and R195. A 'KMSKS' region motif is present at residues 233–237 (RLAKR). K236 is a binding site for ATP.

Belongs to the class-I aminoacyl-tRNA synthetase family. GluQ subfamily. The cofactor is Zn(2+).

Its function is as follows. Catalyzes the tRNA-independent activation of glutamate in presence of ATP and the subsequent transfer of glutamate onto a tRNA(Asp). Glutamate is transferred on the 2-amino-5-(4,5-dihydroxy-2-cyclopenten-1-yl) moiety of the queuosine in the wobble position of the QUC anticodon. In Deinococcus radiodurans (strain ATCC 13939 / DSM 20539 / JCM 16871 / CCUG 27074 / LMG 4051 / NBRC 15346 / NCIMB 9279 / VKM B-1422 / R1), this protein is Glutamyl-Q tRNA(Asp) synthetase.